The following is a 528-amino-acid chain: Tyrosine 3-monooxygenase (528 aa).

A Phosphoserine; by CaMK2 modification is found at Ser-19. A disordered region spans residues 33 to 65 (GQGAPGPSLTGSPWPGTAAPAASYTPTPRSPRF). The span at 47–59 (PGTAAPAASYTPT) shows a compositional bias: low complexity. Ser-62 carries the post-translational modification Phosphoserine. Ser-71 bears the Phosphoserine; by CaMK2 and PKA mark. Residues His-361, His-366, and Glu-406 each contribute to the Fe cation site. At Ser-502 the chain carries Phosphoserine.

It belongs to the biopterin-dependent aromatic amino acid hydroxylase family. Homotetramer. Interacts (when phosphorylated at Ser-19) with YWHAG; one YWHAG dimer binds to one TH tetramer and this interaction may influence the phosphorylation and dephosphorylation of other sites. Interacts with NT5DC2; the interaction results in reduced phosphorylation and decreased catalytic activity of TH. Requires Fe(2+) as cofactor. Phosphorylated on Ser-19, Ser-62 and Ser-71 by several protein kinases with different site specificities. Phosphorylation at Ser-62 and Ser-71 leads to an increase of TH activity. Phosphorylation at Ser-71 activates the enzyme and also counteracts the feedback inhibition of TH by catecholamines. Phosphorylation of Ser-19 and Ser-62 triggers the proteasomal degradation of TH through the ubiquitin-proteasome pathway. Phosphorylation at Ser-62 facilitates transport of TH from the soma to the nerve terminals via the microtubule network. Phosphorylation at Ser-19 induces the high-affinity binding to the 14-3-3 protein YWHAG; this interaction may influence the phosphorylation and dephosphorylation of other sites. Ser-19 increases the phosphorylation at Ser-71 in a hierarchical manner, leading to increased activity. As to expression, mainly expressed in the brain and adrenal glands.

The protein localises to the cytoplasm. It localises to the perinuclear region. It is found in the nucleus. Its subcellular location is the cell projection. The protein resides in the axon. The protein localises to the cytoplasmic vesicle. It localises to the secretory vesicle. It is found in the synaptic vesicle. It carries out the reaction (6R)-L-erythro-5,6,7,8-tetrahydrobiopterin + L-tyrosine + O2 = (4aS,6R)-4a-hydroxy-L-erythro-5,6,7,8-tetrahydrobiopterin + L-dopa. It participates in catecholamine biosynthesis; dopamine biosynthesis; dopamine from L-tyrosine: step 1/2. With respect to regulation, inhibited in feedback fashion by the catecholamine neurotransmitters, especially by dopamine in competition with tetrahydrobiopterin. Phosphorylation of several Ser/Thr residues in the N-terminus regulates the catalytic activity. Ser-62 and Ser-71 are readily phosphorylated to activate the catalytic activity. A Cysteine modification induced by N-ethylmaleimide (NEM), inhibits tyrosine 3-monooxygenase activity through the modification of the Cys-207. Functionally, catalyzes the conversion of L-tyrosine to L-dihydroxyphenylalanine (L-Dopa), the rate-limiting step in the biosynthesis of catecholamines, dopamine, noradrenaline, and adrenaline. Uses tetrahydrobiopterin and molecular oxygen to convert tyrosine to L-Dopa. In addition to tyrosine, is able to catalyze the hydroxylation of phenylalanine and tryptophan with lower specificity. Positively regulates the regression of retinal hyaloid vessels during postnatal development. Lacks catalytic activity. The polypeptide is Tyrosine 3-monooxygenase (Homo sapiens (Human)).